Here is a 170-residue protein sequence, read N- to C-terminus: Thialysine N-epsilon-acetyltransferase (170 aa).

An N-acetyltransferase domain is found at 4–168 (VRIREAKEGD…FQGEATRKLA (165 aa)). Substrate is bound at residue 27-28 (FE). Lys29 carries the N6-acetyllysine modification. Glu92 lines the substrate pocket. Acetyl-CoA-binding positions include 94–96 (IYV), 102–107 (GQGIGS), 133–135 (NQR), and Tyr140. Tyr140 acts as the Proton donor in catalysis. Residue Glu152 participates in substrate binding.

Belongs to the acetyltransferase family. Homodimer. In terms of tissue distribution, widely expressed. Under physiological conditions, SSAT2 is expressed at lower level that SSAT1 (SSAT). Many tissues express only SSAT1, several tissues express both SSAT1 and SSAT2, and bone, cervix, ovary and pineal gland expressed only SSAT2.

Its subcellular location is the cytoplasm. The catalysed reaction is S-(2-aminoethyl)-L-cysteine + acetyl-CoA = S-(2-acetamidoethyl)-L-cysteine + CoA + H(+). The enzyme catalyses an alkane-alpha,omega-diamine + acetyl-CoA = an N-acetylalkane-alpha,omega-diamine + CoA + H(+). In terms of biological role, catalyzes the N-acetylation of the amino acid thialysine (S-(2-aminoethyl)-L-cysteine), a L-lysine analog with the 4-methylene group substituted with a sulfur. May also catalyze acetylation of polyamines, such as norspermidine, spermidine or spermine. However, ability to acetylate polyamines is weak, suggesting that it does not act as a diamine acetyltransferase in vivo. This Homo sapiens (Human) protein is Thialysine N-epsilon-acetyltransferase.